Consider the following 271-residue polypeptide: Formamidopyrimidine-DNA glycosylase (271 aa).

The Schiff-base intermediate with DNA role is filled by P2. E3 acts as the Proton donor in catalysis. Catalysis depends on K58, which acts as the Proton donor; for beta-elimination activity. The DNA site is built by H92, R111, and R152. The FPG-type zinc-finger motif lies at 237–271 (TVYGREGEPCKQCGRVLKHAMIGQRATVWCGSCQR). Residue R261 is the Proton donor; for delta-elimination activity of the active site.

It belongs to the FPG family. As to quaternary structure, monomer. It depends on Zn(2+) as a cofactor.

The enzyme catalyses Hydrolysis of DNA containing ring-opened 7-methylguanine residues, releasing 2,6-diamino-4-hydroxy-5-(N-methyl)formamidopyrimidine.. The catalysed reaction is 2'-deoxyribonucleotide-(2'-deoxyribose 5'-phosphate)-2'-deoxyribonucleotide-DNA = a 3'-end 2'-deoxyribonucleotide-(2,3-dehydro-2,3-deoxyribose 5'-phosphate)-DNA + a 5'-end 5'-phospho-2'-deoxyribonucleoside-DNA + H(+). Its function is as follows. Involved in base excision repair of DNA damaged by oxidation or by mutagenic agents. Acts as a DNA glycosylase that recognizes and removes damaged bases. Has a preference for oxidized purines, such as 7,8-dihydro-8-oxoguanine (8-oxoG). Has AP (apurinic/apyrimidinic) lyase activity and introduces nicks in the DNA strand. Cleaves the DNA backbone by beta-delta elimination to generate a single-strand break at the site of the removed base with both 3'- and 5'-phosphates. The protein is Formamidopyrimidine-DNA glycosylase of Xanthomonas oryzae pv. oryzae (strain MAFF 311018).